Here is a 360-residue protein sequence, read N- to C-terminus: Inward rectifier potassium channel 13 (360 aa).

The Cytoplasmic segment spans residues 1–50; that stretch reads MDGSHCKVIAPLLTERHQRMVTKDGHSTLQMDGAQTGLAYLRDAWGILMD. The chain crosses the membrane as a helical span at residues 51-77; sequence MRWRWMMLVFSASFVIHWLVFAVLWYI. Topologically, residues 78–105 are extracellular; that stretch reads LAEMNGDLGLDHDAPPENHTICVKYITS. Residues 106–122 constitute an intramembrane region (helical; Pore-forming); that stretch reads FTAAFSFSLETQLTIGY. Positions 119-124 match the Selectivity filter motif; sequence TIGYGT. The Extracellular portion of the chain corresponds to 123-131; that stretch reads GTMFPSGDC. A helical membrane pass occupies residues 132–157; sequence PSAIALLAIQMLLGLMLEAFITGAFV. Over 158–360 the chain is Cytoplasmic; the sequence is AKIARPKNRA…FQISETGLTE (203 aa). Serine 287 is subject to Phosphoserine.

Belongs to the inward rectifier-type potassium channel (TC 1.A.2.1) family. In terms of assembly, homotetramer. Interacts with RAB28; the interaction may facilitate cone outer segments phagocytosis. In terms of processing, phosphorylation at Ser-287 by PKA increases them.

Its subcellular location is the membrane. It localises to the cell membrane. It catalyses the reaction K(+)(in) = K(+)(out). Inhibited by Ba(2+) and Cs(+), although sensitivity to those inhibitors is much lower than in other Kir channels. Inward rectifier potassium channels are characterized by a greater tendency to allow potassium to flow into the cell rather than out of it. Their voltage dependence is regulated by the concentration of extracellular potassium; as external potassium is raised, the voltage range of the channel opening shifts to more positive voltages. The inward rectification is mainly due to the blockage of outward current by internal magnesium. KCNJ13 has a very low single channel conductance, low sensitivity to block by external barium and cesium, and no dependence of its inward rectification properties on the internal blocking particle magnesium. The protein is Inward rectifier potassium channel 13 (KCNJ13) of Bos taurus (Bovine).